The chain runs to 642 residues: 2-oxoacid:ferredoxin oxidoreductase 2, subunit alpha (642 aa).

The short motif at 263 to 267 (YPITP) is the YPITP motif element. Thr-266 and Arg-356 together coordinate substrate.

As to quaternary structure, heterodimer composed of an alpha and a beta subunit.

It carries out the reaction a 2-oxocarboxylate + 2 oxidized [2Fe-2S]-[ferredoxin] + CoA = an acyl-CoA + 2 reduced [2Fe-2S]-[ferredoxin] + CO2 + H(+). In terms of biological role, catalyzes the coenzyme A-dependent oxidative decarboxylation of different 2-oxoacids such as pyruvate, 2-oxobutyrate, glyoxylate and 2-oxoglutarate to form their CoA derivatives. This is 2-oxoacid:ferredoxin oxidoreductase 2, subunit alpha from Aeropyrum pernix (strain ATCC 700893 / DSM 11879 / JCM 9820 / NBRC 100138 / K1).